The sequence spans 229 residues: Cytidylate kinase (229 aa).

An ATP-binding site is contributed by 12–20; the sequence is GPSGSGKGT.

The protein belongs to the cytidylate kinase family. Type 1 subfamily.

The protein resides in the cytoplasm. It catalyses the reaction CMP + ATP = CDP + ADP. It carries out the reaction dCMP + ATP = dCDP + ADP. This is Cytidylate kinase from Pseudomonas fluorescens (strain SBW25).